A 215-amino-acid polypeptide reads, in one-letter code: MSSVYDWFQERLEIQAIADDITSKYVPPHVNIFYCLGGITLTCFIVQVATGFAMTFYYRPTVTEAFASVEYLMTEVNFGWLIRSVHRWSASMMVLNMILHVCRVYLTGGFKKPRELTWVTGVLLASVTVSFGVTGYSLPWDQVGYWACKIVTGVPDAVPIVGGLIVQVLRGGVSVGQSTLTRFYSAHTFVLPVVAAVLMLTHFVMIRKQGISGPL.

The helical transmembrane segment at 32–52 (IFYCLGGITLTCFIVQVATGF) threads the bilayer. Position 35 (Cys35) interacts with heme c. Residues His86 and His100 each coordinate heme b. A run of 3 helical transmembrane segments spans residues 90–110 (ASMM…TGGF), 116–136 (LTWV…VTGY), and 186–206 (AHTF…FVMI). His187 and His202 together coordinate heme b.

The protein belongs to the cytochrome b family. PetB subfamily. In terms of assembly, the 4 large subunits of the cytochrome b6-f complex are cytochrome b6, subunit IV (17 kDa polypeptide, PetD), cytochrome f and the Rieske protein, while the 4 small subunits are PetG, PetL, PetM and PetN. The complex functions as a dimer. Requires heme b as cofactor. Heme c serves as cofactor.

It localises to the plastid. The protein localises to the chloroplast thylakoid membrane. Component of the cytochrome b6-f complex, which mediates electron transfer between photosystem II (PSII) and photosystem I (PSI), cyclic electron flow around PSI, and state transitions. The chain is Cytochrome b6 from Emiliania huxleyi (Coccolithophore).